The following is a 344-amino-acid chain: MAP3K12-binding inhibitory protein 1 (344 aa).

At Ser91 the chain carries Phosphoserine. Glycyl lysine isopeptide (Lys-Gly) (interchain with G-Cter in SUMO2) cross-links involve residues Lys94, Lys118, Lys129, Lys139, Lys153, and Lys235. Positions 172–344 (AEINENNVRE…AESMATHHLP (173 aa)) are interaction with MAP3K12. Positions 271-285 (IYQRIKKLEDKILEL) are leucine-zipper 1. Lys301 carries the N6-acetyllysine; alternate modification. Lys301 is covalently cross-linked (Glycyl lysine isopeptide (Lys-Gly) (interchain with G-Cter in SUMO2); alternate). Residues Lys304 and Lys325 each participate in a glycyl lysine isopeptide (Lys-Gly) (interchain with G-Cter in SUMO2) cross-link. Residues 314–329 (LAELDEKISALKQALL) are leucine-zipper 2.

In terms of assembly, component of the ADA2A-containing complex (ATAC), composed of KAT14, KAT2A, TADA2L, TADA3L, ZZ3, MBIP, WDR5, YEATS2, CCDC101 and DR1. In the complex, it probably interacts directly with KAT2A, KAT14 and WDR5. In terms of tissue distribution, ubiquitous. High expression seen in the heart and lung.

The protein localises to the nucleus. It is found in the cytoplasm. In terms of biological role, inhibits the MAP3K12 activity to induce the activation of the JNK/SAPK pathway. Component of the ATAC complex, a complex with histone acetyltransferase activity on histones H3 and H4. The sequence is that of MAP3K12-binding inhibitory protein 1 (MBIP) from Homo sapiens (Human).